The chain runs to 346 residues: L-glyceraldehyde 3-phosphate reductase (346 aa).

Residues W33, D61, Y66, S168, Q193, T223, L225, Q227, K233, S303, Q307, and N311 each coordinate NADP(+).

Belongs to the shaker potassium channel beta subunit family. In terms of assembly, homotetramer. Homooctamer.

It catalyses the reaction a primary alcohol + NADP(+) = an aldehyde + NADPH + H(+). It carries out the reaction hydroxyacetone + NADP(+) = methylglyoxal + NADPH + H(+). In terms of biological role, aldo-keto reductase that catalyzes the stereospecific, NADPH-dependent reduction of L-glyceraldehyde 3-phosphate (L-GAP) to L-glycerol 3-phosphate (L-G3P). The physiological role of Gpr is the detoxification of L-GAP, which may be formed via non-enzymatic and/or enzymatic racemization of D-GAP. Also contributes to cellular methylglyoxal detoxification by catalyzing the NADPH-dependent conversion of methylglyoxal to acetol. However, the catalytic efficiency of methylglyoxal reductase activity is more than 2 orders of magnitude lower than the L-GAP reductase activity. In addition, exhibits activity with glyoxal and probably plays a significant role in detoxification of glyoxal in vivo. Shows broad specificity and can use aromatic aldehydes such as 4-nitrobenzaldehyde and benzaldehyde, D,L-glyceraldehyde, phenylglyoxal, isatin and the model substrate 4-nitrobenzaldehyde. In Escherichia coli (strain K12), this protein is L-glyceraldehyde 3-phosphate reductase.